Consider the following 49-residue polypeptide: Large ribosomal subunit protein eL40 (49 aa).

The protein belongs to the eukaryotic ribosomal protein eL40 family.

This is Large ribosomal subunit protein eL40 from Methanosarcina barkeri (strain Fusaro / DSM 804).